The following is a 238-amino-acid chain: UPF0328 protein ECU07_0010 (238 aa).

Disordered stretches follow at residues 1-154 (MAAP…NTQR) and 211-238 (GRLH…LATL). A compositionally biased stretch (basic and acidic residues) spans 106 to 128 (HTEGCHTHEANPEPNTKHTETES). Over residues 129-152 (PKPQTSTQHHTPITIPSSLLSQNT) the composition is skewed to polar residues.

This sequence belongs to the UPF0328 family.

The polypeptide is UPF0328 protein ECU07_0010 (Encephalitozoon cuniculi (strain GB-M1) (Microsporidian parasite)).